Here is a 206-residue protein sequence, read N- to C-terminus: Putative NAD(P)H nitroreductase MhqN (206 aa).

FMN-binding positions include 11 to 13 (RRS), 68 to 70 (QYK), 157 to 158 (IG), arginine 193, and arginine 196.

The protein belongs to the nitroreductase family. Homodimer. FMN serves as cofactor.

The protein localises to the cytoplasm. Putative nitroreductase that may contribute to the degradation of aromatic compounds. The polypeptide is Putative NAD(P)H nitroreductase MhqN (mhqN) (Bacillus subtilis (strain 168)).